A 259-amino-acid polypeptide reads, in one-letter code: Pimeloyl-[acyl-carrier protein] methyl ester esterase (259 aa).

Residues tryptophan 18, 78-79 (SL), and 139-143 (FLALD) contribute to the substrate site. Catalysis depends on serine 78, which acts as the Nucleophile. Active-site residues include aspartate 203 and histidine 231. Residue histidine 231 coordinates substrate.

The protein belongs to the AB hydrolase superfamily. Carboxylesterase BioH family. As to quaternary structure, monomer.

The protein resides in the cytoplasm. The catalysed reaction is 6-carboxyhexanoyl-[ACP] methyl ester + H2O = 6-carboxyhexanoyl-[ACP] + methanol + H(+). It functions in the pathway cofactor biosynthesis; biotin biosynthesis. The physiological role of BioH is to remove the methyl group introduced by BioC when the pimeloyl moiety is complete. It allows to synthesize pimeloyl-ACP via the fatty acid synthetic pathway through the hydrolysis of the ester bonds of pimeloyl-ACP esters. This is Pimeloyl-[acyl-carrier protein] methyl ester esterase from Stenotrophomonas maltophilia (strain R551-3).